The primary structure comprises 86 residues: Small ribosomal subunit protein bS16c (86 aa).

Belongs to the bacterial ribosomal protein bS16 family.

The protein localises to the plastid. It localises to the chloroplast. In Liriodendron tulipifera (Tuliptree), this protein is Small ribosomal subunit protein bS16c.